The sequence spans 456 residues: MFS-type transporter SLC18B1 (456 aa).

M1 carries the N-acetylmethionine modification. The disordered stretch occupies residues 1 to 24 (MEALGDLEGPRAPGGDDPAGSAGE). At 1 to 33 (MEALGDLEGPRAPGGDDPAGSAGETPGWLSREQ) the chain is on the cytoplasmic side. The span at 10–23 (PRAPGGDDPAGSAG) shows a compositional bias: low complexity. Residue S21 is modified to Phosphoserine. The helical transmembrane segment at 34 to 54 (VFVLISAASVNLGSMMCYSIL) threads the bilayer. Residues 55-70 (GPFFPKEAEKKGASNT) are Extracellular-facing. The chain crosses the membrane as a helical span at residues 71 to 91 (IIGMIFGCFALFELLASLVFG). The Cytoplasmic portion of the chain corresponds to 92–100 (NYLVHIGAK). A helical transmembrane segment spans residues 101-121 (FMFVAGMFVSGGVTILFGVLD). At 122 to 127 (RVPDGP) the chain is on the extracellular side. The chain crosses the membrane as a helical span at residues 128–148 (VFIAMCFLVRVMDAVSFAAAM). The Cytoplasmic segment spans residues 149-161 (TASSSILAKAFPN). The chain crosses the membrane as a helical span at residues 162-184 (NVATVLGSLETFSGLGLILGPPV). Residues 185-195 (GGFLYQSFGYE) are Extracellular-facing. A helical membrane pass occupies residues 196 to 216 (VPFIVLGCVVLLMVPLNMYIL). Topologically, residues 217 to 230 (PNYESDPGEHSFWK) are cytoplasmic. A helical membrane pass occupies residues 231-251 (LIALPKVGLIAFVINSLSSCF). At 252–272 (GFLDPTLSLFVLEKFNLPAGY) the chain is on the extracellular side. A helical membrane pass occupies residues 273 to 293 (VGLVFLGMALSYAISSPLFGL). Topologically, residues 294–304 (LSDKRPPLRKW) are cytoplasmic. Residues 305–325 (LLVFGNLITAGCYMLLGPVPI) form a helical membrane-spanning segment. The Extracellular portion of the chain corresponds to 326-331 (LHIKSQ). Residues 332–352 (LWLLVLILVVSGLSAGMSIIP) form a helical membrane-spanning segment. Topologically, residues 353-377 (TFPEILSCAHENGFEEGLSTLGLVS) are cytoplasmic. A helical transmembrane segment spans residues 378–398 (GLFSAMWSIGAFMGPTLGGFL). At 399–407 (YEKIGFEWA) the chain is on the extracellular side. Residues 408 to 428 (AAIQGLWALISGLAMGLFYLL) traverse the membrane as a helical segment. Residues 429-456 (EYSRRKRSKSQNILSTEEERTTLLPNET) are Cytoplasmic-facing. The residue at position 438 (S438) is a Phosphoserine.

The protein belongs to the major facilitator superfamily. In terms of tissue distribution, expressed in various tissues including lung, placenta, adrenal gland, liver, testis, and brain.

The protein resides in the cytoplasmic vesicle. Its subcellular location is the secretory vesicle membrane. The protein localises to the secretory vesicle. It localises to the synaptic vesicle membrane. The enzyme catalyses spermine(in) + n H(+)(out) = spermine(out) + n H(+)(in). It carries out the reaction spermidine(in) + n H(+)(out) = spermidine(out) + n H(+)(in). The catalysed reaction is serotonin(in) + n H(+)(out) = serotonin(out) + n H(+)(in). Proton-coupled polyamine antiporter involved in the translocation of polyamines from cytosol into secretory vesicles prior to their release via exocytosis. Uses the electrochemical proton gradient generated by a V-type proton-pumping ATPase to couple the efflux of protons with the uptake of a polyamine molecule. Facilitates vesicular storage of spermine and spermidine in astrocytes with an impact on glutamatergic neuronal transmission and memory formation. Upon antigen stimulation, regulates polyamine accumulation and release in mast cell secretory granules, which in turn potentiates mast cell degranulation and histamine secretion. This is MFS-type transporter SLC18B1 from Homo sapiens (Human).